We begin with the raw amino-acid sequence, 462 residues long: Glutamate--tRNA ligase 1 (462 aa).

Positions 8–18 (PSPTGYLHIGG) match the 'HIGH' region motif. A 'KMSKS' region motif is present at residues 237-241 (KLSKR). Lys-240 contributes to the ATP binding site.

Belongs to the class-I aminoacyl-tRNA synthetase family. Glutamate--tRNA ligase type 1 subfamily. Monomer.

Its subcellular location is the cytoplasm. The enzyme catalyses tRNA(Glu) + L-glutamate + ATP = L-glutamyl-tRNA(Glu) + AMP + diphosphate. Catalyzes the attachment of glutamate to tRNA(Glu) in a two-step reaction: glutamate is first activated by ATP to form Glu-AMP and then transferred to the acceptor end of tRNA(Glu). The sequence is that of Glutamate--tRNA ligase 1 from Sulfurimonas denitrificans (strain ATCC 33889 / DSM 1251) (Thiomicrospira denitrificans (strain ATCC 33889 / DSM 1251)).